The sequence spans 267 residues: Ribosomal RNA small subunit methyltransferase A (267 aa).

Residues N18, L20, G45, E66, D91, and N112 each contribute to the S-adenosyl-L-methionine site.

This sequence belongs to the class I-like SAM-binding methyltransferase superfamily. rRNA adenine N(6)-methyltransferase family. RsmA subfamily.

It is found in the cytoplasm. The catalysed reaction is adenosine(1518)/adenosine(1519) in 16S rRNA + 4 S-adenosyl-L-methionine = N(6)-dimethyladenosine(1518)/N(6)-dimethyladenosine(1519) in 16S rRNA + 4 S-adenosyl-L-homocysteine + 4 H(+). Its function is as follows. Specifically dimethylates two adjacent adenosines (A1518 and A1519) in the loop of a conserved hairpin near the 3'-end of 16S rRNA in the 30S particle. May play a critical role in biogenesis of 30S subunits. The sequence is that of Ribosomal RNA small subunit methyltransferase A from Shewanella pealeana (strain ATCC 700345 / ANG-SQ1).